The chain runs to 123 residues: Beta-defensin 126 (123 aa).

A signal peptide spans 1-20 (MKSLLFTLAVFMLLAQLVSG). The in vitro binds to LPS, mediates antimicrobial activity and inhibits LPS-mediated inflammation stretch occupies residues 21-63 (NLYVKRCLNDIGICKKTCKPEEVRSEHGWVMCGKRKACCVPAD). 3 disulfides stabilise this stretch: C27/C58, C34/C52, and C38/C59.

It belongs to the beta-defensin family. In terms of assembly, homodimer or homooligomer; disulfide-linked. In terms of processing, O-glycosylated; glycans contain sialic acids alpha(2,3)-linked to galactose and N-acetylgalactosamine. The C-terminal O-glycosylation contributes substantially to the sperm glyocalyx. High-level and epididymis-specific expression. Detected in epithelial cells lining the efferent ductules, initial segment, and cauda regions of the epididymis, but not on spermatozoa.

It is found in the secreted. Highly glycosylated atypical beta-defensin involved in several aspects of sperm function. Facilitates sperm transport in the female reproductive tract and contributes to sperm protection against immunodetection; both functions are probably implicating the negative surface charge provided by its O-linked oligosaccharides in the sperm glycocalyx. Involved in binding of sperm to oviductal epithelial cells to form a sperm reservoir until ovulation. Release from the sperm surface during capacitation and ovaluation by an elevation of oviductal fluid pH is unmasking other surface components and allows sperm to penetrate the cumulus matrix and bind to the zona pellucida of the oocyte. In vitro has antimicrobial activity and may inhibit LPS-mediated inflammation. This Macaca fascicularis (Crab-eating macaque) protein is Beta-defensin 126 (DEFB126).